The primary structure comprises 495 residues: ATP synthase subunit beta, chloroplastic (495 aa).

172–179 is an ATP binding site; the sequence is GGAGVGKT.

This sequence belongs to the ATPase alpha/beta chains family. F-type ATPases have 2 components, CF(1) - the catalytic core - and CF(0) - the membrane proton channel. CF(1) has five subunits: alpha(3), beta(3), gamma(1), delta(1), epsilon(1). CF(0) has four main subunits: a(1), b(1), b'(1) and c(9-12).

It localises to the plastid. Its subcellular location is the chloroplast thylakoid membrane. The catalysed reaction is ATP + H2O + 4 H(+)(in) = ADP + phosphate + 5 H(+)(out). In terms of biological role, produces ATP from ADP in the presence of a proton gradient across the membrane. The catalytic sites are hosted primarily by the beta subunits. The chain is ATP synthase subunit beta, chloroplastic from Pseudogaltonia clavata (Cape hyacinth).